We begin with the raw amino-acid sequence, 79 residues long: Putative membrane protein insertion efficiency factor (79 aa).

It belongs to the UPF0161 family.

The protein localises to the cell inner membrane. Could be involved in insertion of integral membrane proteins into the membrane. The protein is Putative membrane protein insertion efficiency factor of Prochlorococcus marinus (strain NATL2A).